Here is a 148-residue protein sequence, read N- to C-terminus: Lysozyme C (148 aa).

Residues 1–18 (MKALTILGLVLLSVTVQG) form the signal peptide. The region spanning 19–148 (KIFERCELAR…VSQYVKGCGV (130 aa)) is the C-type lysozyme domain. Disulfide bonds link Cys-24-Cys-146, Cys-48-Cys-134, Cys-83-Cys-99, and Cys-95-Cys-113. Residues Glu-53 and Asp-71 contribute to the active site.

Belongs to the glycosyl hydrolase 22 family. As to quaternary structure, monomer.

The protein localises to the secreted. The enzyme catalyses Hydrolysis of (1-&gt;4)-beta-linkages between N-acetylmuramic acid and N-acetyl-D-glucosamine residues in a peptidoglycan and between N-acetyl-D-glucosamine residues in chitodextrins.. Functionally, lysozymes have primarily a bacteriolytic function; those in tissues and body fluids are associated with the monocyte-macrophage system and enhance the activity of immunoagents. Also plays a role in digestion in this species. In Semnopithecus entellus (Northern plains gray langur), this protein is Lysozyme C (LYZ).